We begin with the raw amino-acid sequence, 371 residues long: tRNA-specific 2-thiouridylase MnmA (371 aa).

ATP is bound by residues 13–20 and M39; that span reads GMSGGVDS. Residues 99 to 101 are interaction with target base in tRNA; it reads NPD. The Nucleophile role is filled by C104. A disulfide bridge connects residues C104 and C200. An ATP-binding site is contributed by G128. The segment at 150–152 is interaction with tRNA; the sequence is KDQ. Catalysis depends on C200, which acts as the Cysteine persulfide intermediate. Positions 308–309 are interaction with tRNA; it reads RY.

The protein belongs to the MnmA/TRMU family.

Its subcellular location is the cytoplasm. It catalyses the reaction S-sulfanyl-L-cysteinyl-[protein] + uridine(34) in tRNA + AH2 + ATP = 2-thiouridine(34) in tRNA + L-cysteinyl-[protein] + A + AMP + diphosphate + H(+). In terms of biological role, catalyzes the 2-thiolation of uridine at the wobble position (U34) of tRNA, leading to the formation of s(2)U34. In Bacillus mycoides (strain KBAB4) (Bacillus weihenstephanensis), this protein is tRNA-specific 2-thiouridylase MnmA.